Reading from the N-terminus, the 336-residue chain is Porphobilinogen deaminase (336 aa).

Cysteine 251 is modified (S-(dipyrrolylmethanemethyl)cysteine). Phosphoserine is present on residues serine 327 and serine 329.

The protein belongs to the HMBS family. The cofactor is dipyrromethane.

The catalysed reaction is 4 porphobilinogen + H2O = hydroxymethylbilane + 4 NH4(+). It functions in the pathway porphyrin-containing compound metabolism; protoporphyrin-IX biosynthesis; coproporphyrinogen-III from 5-aminolevulinate: step 2/4. Functionally, tetrapolymerization of the monopyrrole PBG into the hydroxymethylbilane pre-uroporphyrinogen in several discrete steps. The protein is Porphobilinogen deaminase (hem3) of Schizosaccharomyces pombe (strain 972 / ATCC 24843) (Fission yeast).